Here is a 390-residue protein sequence, read N- to C-terminus: Endothelial cell-selective adhesion molecule (390 aa).

Positions 1–29 (MISLPGPLVTNLLRFLFLGLSALAPPSRA) are cleaved as a signal peptide. The region spanning 30 to 143 (ELQLHLPANQ…NGQASGHSIK (114 aa)) is the Ig-like V-type domain. At 30–248 (ELQLHLPANQ…LEVSTGPGAA (219 aa)) the chain is on the extracellular side. N-linked (GlcNAc...) asparagine glycans are attached at residues N108, N169, N213, and N236. The Ig-like C2-type domain maps to 156 to 242 (PSCRLQGVPR…AQCNVTLEVS (87 aa)). A disulfide bridge connects residues C174 and C224. A helical membrane pass occupies residues 249–269 (VVAGAVVGTLVGLGLLAGLVL). The Cytoplasmic segment spans residues 270-390 (LYHRRGKALE…PAQSQAGSLV (121 aa)). Phosphoserine is present on S301. The disordered stretch occupies residues 316–365 (ARALRPPHGPPRPGALTPTPSLSSQALPSPRLPTTDGANPQPISLIPGGV). 2 positions are modified to phosphothreonine: T332 and T334. The span at 333-342 (PTPSLSSQAL) shows a compositional bias: polar residues. 4 positions are modified to phosphoserine: S336, S339, S344, and S371.

As to quaternary structure, interacts with MAGI1.

Its subcellular location is the cell junction. It is found in the adherens junction. It localises to the tight junction. The protein resides in the cell membrane. In terms of biological role, can mediate aggregation most likely through a homophilic molecular interaction. The chain is Endothelial cell-selective adhesion molecule (ESAM) from Macaca fascicularis (Crab-eating macaque).